The chain runs to 317 residues: Transcription initiation factor IIB 3 (317 aa).

The span at 1–14 (MERATREREKEQRE) shows a compositional bias: basic and acidic residues. A disordered region spans residues 1-25 (MERATREREKEQREQAQTNDEAQQC). A TFIIB-type zinc finger spans residues 21–50 (EAQQCPECNSANVITDQSERVCEDCGLVLE). Residues Cys25, Cys28, Cys42, and Cys45 each contribute to the Zn(2+) site. The segment at 62–83 (AFNSSERDQKSRVGAPTTKTMH) is disordered. A run of 2 repeats spans residues 136-219 (SEID…AQEL) and 230-311 (EYLP…EQIE).

This sequence belongs to the TFIIB family.

Its function is as follows. Stabilizes TBP binding to an archaeal box-A promoter. Also responsible for recruiting RNA polymerase II to the pre-initiation complex (DNA-TBP-TFIIB). In Halobacterium salinarum (strain ATCC 700922 / JCM 11081 / NRC-1) (Halobacterium halobium), this protein is Transcription initiation factor IIB 3.